Reading from the N-terminus, the 525-residue chain is Sterol O-acyltransferase 2 (525 aa).

Disordered stretches follow at residues 1–34 (MQPKVPQLRRREGLGEEQEKGARGGEGNARTHGT) and 77–97 (QDRPLPSAAPDSTSKTQELHP). The Cytoplasmic portion of the chain corresponds to 1–119 (MQPKVPQLRR…IDELMEVQHF (119 aa)). The span at 9–23 (RRREGLGEEQEKGAR) shows a compositional bias: basic and acidic residues. Histidine 118 provides a ligand contact to cholesterol. A helical membrane pass occupies residues 120–141 (RTIYHMFIAGLCVLIISTLAID). Topologically, residues 142-161 (FIDEGRLMLEFDLLLFSFGQ) are lumenal. A helical transmembrane segment spans residues 162 to 187 (LPLALMTWVPMFLSTLLVPYQTLWLW). Over 188-199 (ARPRAGGAWMLG) the chain is Cytoplasmic. The chain crosses the membrane as a helical span at residues 200-223 (ASLGCVLLAAHAVVLCVLPVHVSV). The Lumenal segment spans residues 224–231 (RHELPPAS). The helical transmembrane segment at 232-255 (RCVLVFEQVRLLMKSYSFLRETVP) threads the bilayer. At 256–296 (GIFCVRGGKGISPPSFSSYLYFLFCPTLIYRETYPRTPSIR) the chain is on the cytoplasmic side. Cysteine 280 bears the Cysteine sulfenic acid (-SOH); alternate mark. Residue cysteine 280 forms a Glycyl cysteine thioester (Cys-Gly) (interchain with G-Cter in ubiquitin); alternate linkage. Residues 297 to 329 (WNYVAKNFAQVLGCLLYACFILGRLCVPVFANM) traverse the membrane as a helical segment. Topologically, residues 330-346 (SREPFSTRALLLSILHA) are lumenal. Residues 347–372 (TGPGIFMLLLIFFAFLHCWLNAFAEM) form a helical membrane-spanning segment. Residues 373 to 420 (LRFGDRMFYRDWWNSTSFSNYYRTWNVVVHDWLYSYVYQDGLWLLGRR) lie on the Cytoplasmic side of the membrane. An FYXDWWN motif motif is present at residues 380–386 (FYRDWWN). Positions 392, 395, 398, 402, 410, and 433 each coordinate an acyl-CoA. A helical transmembrane segment spans residues 421-445 (ARGVAMLGVFLVSAVVHEYIFCFVL). The active site involves histidine 437. Residues 446–451 (GFFYPV) lie on the Lumenal side of the membrane. Residues 452–467 (MLMLFLVFGGLLNFTM) traverse the membrane as a helical segment. Topologically, residues 468 to 473 (NDRHTG) are cytoplasmic. The chain crosses the membrane as a helical span at residues 474–505 (PAWNILMWTFLFMGQGIQVSLYCQEWYARRHC). Over 506 to 525 (PLPQTTFWGMVTPRSWSCHP) the chain is Lumenal.

Belongs to the membrane-bound acyltransferase family. Sterol o-acyltransferase subfamily. As to quaternary structure, may form homo- or heterodimers. Interacts with INSIG1; the interaction is direct and promotes association with AMFR/gp78. In terms of processing, polyubiquitinated by AMFR/gp78 at Cys-280, leading to its degradation when the lipid levels are low. Association with AMFR/gp78 is mediated via interaction with INSIG1. High concentration of cholesterol and fatty acid results in Cys-280 oxidation, preventing ubiquitination at the same site, resulting in protein stabilization. Oxidized at Cys-280: high concentration of cholesterol and fatty acid induce reactive oxygen species, which oxidizes Cys-280, preventing ubiquitination at the same site, and resulting in protein stabilization.

The protein resides in the endoplasmic reticulum membrane. It carries out the reaction a sterol + a long-chain fatty acyl-CoA = a long-chain 3-hydroxysterol ester + CoA. The catalysed reaction is cholesterol + an acyl-CoA = a cholesterol ester + CoA. It catalyses the reaction cholesterol + (9Z)-octadecenoyl-CoA = cholesteryl (9Z-octadecenoate) + CoA. The enzyme catalyses (5Z,8Z,11Z,14Z,17Z)-eicosapentaenoyl-CoA + cholesterol = (5Z,8Z,11Z,14Z,17Z-eicosapentaenoyl)-cholesterol + CoA. It carries out the reaction (9Z,12Z,15Z)-octadecatrienoyl-CoA + cholesterol = (9Z,12Z,15Z-octadecatrienoyl)-cholesterol + CoA. The catalysed reaction is (5Z,8Z,11Z,14Z)-eicosatetraenoyl-CoA + cholesterol = cholesteryl (5Z,8Z,11Z,14Z)-eicosatetraenoate + CoA. Catalyzes the formation of fatty acid-cholesterol esters, which are less soluble in membranes than cholesterol. Plays a role in lipoprotein assembly and dietary cholesterol absorption. Utilizes oleoyl-CoA ((9Z)-octadecenoyl-CoA) and linolenoyl-CoA ((9Z,12Z,15Z)-octadecatrienoyl-CoA) as substrates. May provide cholesteryl esters for lipoprotein secretion from hepatocytes and intestinal mucosa. The protein is Sterol O-acyltransferase 2 of Mus musculus (Mouse).